We begin with the raw amino-acid sequence, 80 residues long: Metallothionein-like protein type 2, MT2-4/MT2-25 (80 aa).

This sequence belongs to the metallothionein superfamily. Type 15 family.

Functionally, metallothioneins have a high content of cysteine residues that bind various heavy metals. In Brassica juncea (Indian mustard), this protein is Metallothionein-like protein type 2, MT2-4/MT2-25.